A 146-amino-acid polypeptide reads, in one-letter code: Transcription antitermination protein NusB (146 aa).

The protein belongs to the NusB family.

Its function is as follows. Involved in transcription antitermination. Required for transcription of ribosomal RNA (rRNA) genes. Binds specifically to the boxA antiterminator sequence of the ribosomal RNA (rrn) operons. This is Transcription antitermination protein NusB from Herpetosiphon aurantiacus (strain ATCC 23779 / DSM 785 / 114-95).